The sequence spans 128 residues: Large-conductance mechanosensitive channel (128 aa).

A run of 2 helical transmembrane segments spans residues 10–30 (FAMR…SAFG) and 76–96 (GLFI…FMMI).

It belongs to the MscL family. As to quaternary structure, homopentamer.

The protein resides in the cell inner membrane. In terms of biological role, channel that opens in response to stretch forces in the membrane lipid bilayer. May participate in the regulation of osmotic pressure changes within the cell. The protein is Large-conductance mechanosensitive channel of Haemophilus influenzae (strain PittEE).